A 483-amino-acid polypeptide reads, in one-letter code: Probable cytosol aminopeptidase (483 aa).

2 residues coordinate Mn(2+): Lys-244 and Asp-249. The active site involves Lys-256. 3 residues coordinate Mn(2+): Asp-267, Asp-326, and Glu-328. Residue Arg-330 is part of the active site.

Belongs to the peptidase M17 family. The cofactor is Mn(2+).

It is found in the cytoplasm. It carries out the reaction Release of an N-terminal amino acid, Xaa-|-Yaa-, in which Xaa is preferably Leu, but may be other amino acids including Pro although not Arg or Lys, and Yaa may be Pro. Amino acid amides and methyl esters are also readily hydrolyzed, but rates on arylamides are exceedingly low.. The enzyme catalyses Release of an N-terminal amino acid, preferentially leucine, but not glutamic or aspartic acids.. In terms of biological role, presumably involved in the processing and regular turnover of intracellular proteins. Catalyzes the removal of unsubstituted N-terminal amino acids from various peptides. The sequence is that of Probable cytosol aminopeptidase from Campylobacter jejuni subsp. jejuni serotype O:2 (strain ATCC 700819 / NCTC 11168).